The sequence spans 407 residues: Keratin, type I cuticular Ha2 (407 aa).

Residues 1–55 are head; sequence MPSVCMPTTYRPASCLSKTYLSSSCQPSNRRPTGCISSSMGTYGLFCEGAFNGNE. Residues 55 to 366 enclose the IF rod domain; that stretch reads EKETMQVLND…GLLESEDSKL (312 aa). The coil 1A stretch occupies residues 56 to 90; sequence KETMQVLNDRLANYLEKVRQLEKENAELEGKIQDV. Residues 91–101 are linker 1; it reads YQGQVLTMCPD. A coil 1B region spans residues 102–202; it reads YQSYFQTIEE…HEEEVGVLRQ (101 aa). Residues 203-218 are linker 12; that stretch reads QLGDRLNIEVDAAPPV. The coil 2 stretch occupies residues 219–362; sequence DLTRMLEEMR…DTYRGLLESE (144 aa). The segment at 363–407 is tail; that stretch reads DSKLPCNPCSTPSCQPCAPSPGVSRTVCVPHTVCVPCSPCLQTRY.

Belongs to the intermediate filament family. As to expression, cuticle of the hair shaft.

This Mus musculus (Mouse) protein is Keratin, type I cuticular Ha2 (Krt32).